Reading from the N-terminus, the 493-residue chain is Matrilin-1 (493 aa).

The first 23 residues, 1 to 23 (MDGIFCALPLSLLLLLQSCGVWG), serve as a signal peptide directing secretion. In terms of domain architecture, VWFA 1 spans 24–220 (APPQPRGTLC…THKFQEAFCV (197 aa)). Asparagine 74 carries N-linked (GlcNAc...) asparagine glycosylation. Residues 221–261 (VSDLCATGDHDCEQICISTPGSYKCACKEGFTLNNDGKTCS) enclose the EGF-like domain. Intrachain disulfides connect cysteine 225–cysteine 236, cysteine 232–cysteine 245, and cysteine 247–cysteine 260. A VWFA 2 domain is found at 262–450 (ACSGGSGSAL…GKKLQMKICV (189 aa)). Residues 462 to 492 (KFQTKVEELINTLQQKLEAVAKRIEALENKI) are a coiled coil.

In terms of assembly, homotrimer. Expressed in xyphoid cartilage and chondrocytes (at protein level).

The protein resides in the secreted. It is found in the extracellular space. The protein localises to the extracellular matrix. In terms of biological role, a major component of the extracellular matrix of non-articular cartilage. Binds to type 2 collagens and forms long concatenated protein networks as part of the extracellular matrix. Required for the network-like organization and bundling of collagen fibrils surrounding chondrocytes in the zones of maturation and hypertrophy. Required for mechanotransduction and adaption to mechanical loading in cartilage chondrocytes, resulting in an increase in expression of the extracellular matrix components ACAN and COL2A1. Acts as a moderator of angiogenesis in response to injury. The polypeptide is Matrilin-1 (Gallus gallus (Chicken)).